The following is a 563-amino-acid chain: Tripeptidyl-peptidase 1 (563 aa).

The first 19 residues, 1 to 19 (MGPRSGLLGLFALFVAGKC), serve as a signal peptide directing secretion. A propeptide spans 20 to 195 (SYSPEPDQQR…PEPQVPGTVG (176 aa)) (removed in mature form). A disulfide bridge links C111 with C122. One can recognise a Peptidase S53 domain in the interval 199–563 (GVTPSVIRKR…PALLKTLMNP (365 aa)). N-linked (GlcNAc...) asparagine glycans are attached at residues N210 and N222. Active-site charge relay system residues include E272 and D276. N-linked (GlcNAc...) asparagine glycans are attached at residues N286, N313, and N443. Cystine bridges form between C365–C526 and C522–C537. S475 functions as the Charge relay system in the catalytic mechanism. 2 residues coordinate Ca(2+): D517 and V518. Ca(2+) contacts are provided by G539, G541, and D543.

As to quaternary structure, monomer. Interacts with CLN5. Interacts with CLN3. Ca(2+) is required as a cofactor. Activated by autocatalytic proteolytical processing upon acidification. N-glycosylation is required for processing and activity.

It is found in the lysosome. The protein resides in the melanosome. The enzyme catalyses Release of an N-terminal tripeptide from a polypeptide, but also has endopeptidase activity.. In terms of biological role, lysosomal serine protease with tripeptidyl-peptidase I activity. May act as a non-specific lysosomal peptidase which generates tripeptides from the breakdown products produced by lysosomal proteinases. Requires substrates with an unsubstituted N-terminus. This is Tripeptidyl-peptidase 1 (TPP1) from Bos taurus (Bovine).